The primary structure comprises 142 residues: Extracellular globin-1 (142 aa).

Positions 1 to 142 (ECLVTEGLKV…DQIIDGIKDI (142 aa)) constitute a Globin domain. A disulfide bridge links C2 with C131. H94 lines the heme b pocket.

Belongs to the globin family. The extracellular hemoglobin of the earthworm consists of 12 subunits that have a hexagonal bilayer structure with a molecular weight near 3.8 million. Each one-twelfth subunit is composed primarily of disulfide linked trimers (chains A, B, and C) and monomers (chain D).

This chain is Extracellular globin-1, found in Lumbricus terrestris (Common earthworm).